The sequence spans 120 residues: Small ribosomal subunit protein bS16 (120 aa).

The tract at residues 80 to 120 is disordered; sequence GLKKRPARNNPHKGEPGKKAQERIAAAKQAAEDAKAAEASA. The segment covering 81–90 has biased composition (basic residues); that stretch reads LKKRPARNNP. Basic and acidic residues-rich tracts occupy residues 91 to 101 and 109 to 120; these read HKGEPGKKAQE and AAEDAKAAEASA.

It belongs to the bacterial ribosomal protein bS16 family.

This chain is Small ribosomal subunit protein bS16, found in Bartonella bacilliformis (strain ATCC 35685 / KC583 / Herrer 020/F12,63).